A 413-amino-acid polypeptide reads, in one-letter code: 1-deoxy-D-xylulose 5-phosphate reductoisomerase (413 aa).

6 residues coordinate NADPH: T21, G22, S23, I24, G47, and N127. K128 contacts 1-deoxy-D-xylulose 5-phosphate. An NADPH-binding site is contributed by E129. D151 is a binding site for Mn(2+). 1-deoxy-D-xylulose 5-phosphate is bound by residues S152, E153, S177, and H200. E153 contributes to the Mn(2+) binding site. NADPH is bound at residue G206. S213, N218, K219, and E222 together coordinate 1-deoxy-D-xylulose 5-phosphate. E222 serves as a coordination point for Mn(2+).

This sequence belongs to the DXR family. Requires Mg(2+) as cofactor. Mn(2+) is required as a cofactor.

It catalyses the reaction 2-C-methyl-D-erythritol 4-phosphate + NADP(+) = 1-deoxy-D-xylulose 5-phosphate + NADPH + H(+). Its pathway is isoprenoid biosynthesis; isopentenyl diphosphate biosynthesis via DXP pathway; isopentenyl diphosphate from 1-deoxy-D-xylulose 5-phosphate: step 1/6. Functionally, catalyzes the NADPH-dependent rearrangement and reduction of 1-deoxy-D-xylulose-5-phosphate (DXP) to 2-C-methyl-D-erythritol 4-phosphate (MEP). The polypeptide is 1-deoxy-D-xylulose 5-phosphate reductoisomerase (Mycobacterium bovis (strain ATCC BAA-935 / AF2122/97)).